Reading from the N-terminus, the 1064-residue chain is Fibropellin-1 (1064 aa).

The signal sequence occupies residues methionine 1–glycine 19. Residues glutamine 20–aspartate 55 enclose the EGF-like 1 domain. 4 disulfide bridges follow: cysteine 23/cysteine 34, cysteine 28/cysteine 43, cysteine 45/cysteine 54, and cysteine 62/cysteine 88. Asparagine 30 carries N-linked (GlcNAc...) asparagine glycosylation. The region spanning cysteine 62–serine 175 is the CUB domain. The N-linked (GlcNAc...) asparagine glycan is linked to asparagine 136. Positions aspartate 176–glutamate 212 constitute an EGF-like 2; calcium-binding domain. 61 disulfides stabilise this stretch: cysteine 180-cysteine 191, cysteine 185-cysteine 200, cysteine 202-cysteine 211, cysteine 218-cysteine 229, cysteine 223-cysteine 238, cysteine 240-cysteine 249, cysteine 256-cysteine 267, cysteine 261-cysteine 276, cysteine 278-cysteine 287, cysteine 294-cysteine 305, cysteine 299-cysteine 314, cysteine 316-cysteine 325, cysteine 332-cysteine 343, cysteine 337-cysteine 352, cysteine 354-cysteine 363, cysteine 370-cysteine 381, cysteine 375-cysteine 390, cysteine 392-cysteine 401, cysteine 408-cysteine 419, cysteine 413-cysteine 428, cysteine 430-cysteine 439, cysteine 446-cysteine 457, cysteine 451-cysteine 466, cysteine 468-cysteine 477, cysteine 484-cysteine 495, cysteine 489-cysteine 504, cysteine 506-cysteine 515, cysteine 522-cysteine 533, cysteine 527-cysteine 542, cysteine 544-cysteine 553, cysteine 560-cysteine 571, cysteine 565-cysteine 580, cysteine 582-cysteine 591, cysteine 598-cysteine 609, cysteine 603-cysteine 618, cysteine 620-cysteine 629, cysteine 636-cysteine 647, cysteine 641-cysteine 656, cysteine 658-cysteine 667, cysteine 674-cysteine 685, cysteine 679-cysteine 694, cysteine 696-cysteine 705, cysteine 712-cysteine 723, cysteine 717-cysteine 732, cysteine 734-cysteine 743, cysteine 750-cysteine 761, cysteine 755-cysteine 770, cysteine 772-cysteine 781, cysteine 788-cysteine 799, cysteine 793-cysteine 808, cysteine 810-cysteine 819, cysteine 826-cysteine 837, cysteine 831-cysteine 846, cysteine 848-cysteine 857, cysteine 864-cysteine 875, cysteine 869-cysteine 884, cysteine 886-cysteine 895, cysteine 902-cysteine 913, cysteine 907-cysteine 922, cysteine 924-cysteine 933, and cysteine 939-cysteine 1015. The 37-residue stretch at aspartate 214–glutamate 250 folds into the EGF-like 3; calcium-binding domain. One can recognise an EGF-like 4; calcium-binding domain in the interval asparagine 252–glutamate 288. An EGF-like 5; calcium-binding domain is found at asparagine 290 to glutamate 326. The region spanning asparagine 328–alanine 364 is the EGF-like 6; calcium-binding domain. In terms of domain architecture, EGF-like 7; calcium-binding spans asparagine 366 to glutamate 402. Positions aspartate 404–glutamate 440 constitute an EGF-like 8; calcium-binding domain. The EGF-like 9; calcium-binding domain maps to asparagine 442 to glutamate 478. The region spanning aspartate 480–glutamate 516 is the EGF-like 10; calcium-binding domain. The EGF-like 11; calcium-binding domain occupies aspartate 518–glutamate 554. Positions aspartate 556–glutamate 592 constitute an EGF-like 12; calcium-binding domain. The EGF-like 13; calcium-binding domain occupies aspartate 594–glutamate 630. In terms of domain architecture, EGF-like 14; calcium-binding spans asparagine 632 to glycine 668. One can recognise an EGF-like 15; calcium-binding domain in the interval glutamate 670–glutamine 706. In terms of domain architecture, EGF-like 16; calcium-binding spans asparagine 708–glutamate 744. The EGF-like 17; calcium-binding domain maps to glutamate 746–glutamate 782. An EGF-like 18; calcium-binding domain is found at aspartate 784–glutamate 820. The 37-residue stretch at asparagine 822–glutamate 858 folds into the EGF-like 19; calcium-binding domain. Asparagine 851 carries an N-linked (GlcNAc...) asparagine glycan. Residues serine 860 to glutamate 896 enclose the EGF-like 20 domain. Residues aspartate 898 to glutamate 934 form the EGF-like 21; calcium-binding domain. The region spanning glycine 937–glutamine 1056 is the Avidin-like domain.

Homotetramer.

It localises to the secreted. The protein resides in the extracellular space. It is found in the cytoplasmic vesicle. Its subcellular location is the extracellular matrix. The protein localises to the hyaline layer. It localises to the apical lamina. Forms the apical lamina, a component of the extracellular matrix. The chain is Fibropellin-1 (EGF1) from Strongylocentrotus purpuratus (Purple sea urchin).